The following is a 203-amino-acid chain: MKKLAITCALLSGMVVSQVWADAASDLKSRLDKVSSFHASFTQKVTDGSGNAVQDGQGDLWVKRPNLFNWHMTQPDESVLVSDGKTLWFYNPFVEQATATWLKDATSNTPFMLIARNQSSDWQQYNIKQNGDDFVLTPKSGSGNLKQFTINVGRDGTIHQFSAVEQDDQRSSYQLKSQQNGAVDAAKFTFTPPKGVTVDDQRK.

Positions Met1 to Ala21 are cleaved as a signal peptide.

Belongs to the LolA family. As to quaternary structure, monomer.

It localises to the periplasm. Participates in the translocation of lipoproteins from the inner membrane to the outer membrane. Only forms a complex with a lipoprotein if the residue after the N-terminal Cys is not an aspartate (The Asp acts as a targeting signal to indicate that the lipoprotein should stay in the inner membrane). This is Outer-membrane lipoprotein carrier protein from Klebsiella pneumoniae subsp. pneumoniae (strain ATCC 700721 / MGH 78578).